The sequence spans 401 residues: Imidazolonepropionase (401 aa).

Residues H70 and H72 each contribute to the Fe(3+) site. Residues H70 and H72 each contribute to the Zn(2+) site. Residues R79, Y142, and H175 each contribute to the 4-imidazolone-5-propanoate site. Y142 serves as a coordination point for N-formimidoyl-L-glutamate. Fe(3+) is bound at residue H240. H240 is a binding site for Zn(2+). 4-imidazolone-5-propanoate is bound at residue Q243. Residue D315 participates in Fe(3+) binding. D315 serves as a coordination point for Zn(2+). N-formimidoyl-L-glutamate is bound by residues N317 and G319. Residue S320 participates in 4-imidazolone-5-propanoate binding.

Belongs to the metallo-dependent hydrolases superfamily. HutI family. Requires Zn(2+) as cofactor. The cofactor is Fe(3+).

It localises to the cytoplasm. It carries out the reaction 4-imidazolone-5-propanoate + H2O = N-formimidoyl-L-glutamate. It participates in amino-acid degradation; L-histidine degradation into L-glutamate; N-formimidoyl-L-glutamate from L-histidine: step 3/3. Catalyzes the hydrolytic cleavage of the carbon-nitrogen bond in imidazolone-5-propanoate to yield N-formimidoyl-L-glutamate. It is the third step in the universal histidine degradation pathway. The polypeptide is Imidazolonepropionase (Ruegeria pomeroyi (strain ATCC 700808 / DSM 15171 / DSS-3) (Silicibacter pomeroyi)).